Here is a 148-residue protein sequence, read N- to C-terminus: Snaclec 7 (148 aa).

An N-terminal signal peptide occupies residues 1–23; the sequence is MGRFIFVSFGLLVVFLSLSGTGA. 3 disulfides stabilise this stretch: cysteine 27–cysteine 38, cysteine 55–cysteine 144, and cysteine 121–cysteine 136. The region spanning 34–145 is the C-type lectin domain; it reads HERHCYKVIN…CSSTHPFVCK (112 aa).

Belongs to the snaclec family. As to quaternary structure, heterodimer; disulfide-linked. As to expression, expressed by the venom gland.

Its subcellular location is the secreted. Interferes with one step of hemostasis (modulation of platelet aggregation, or coagulation cascade, for example). The chain is Snaclec 7 from Echis pyramidum leakeyi (Leakey's carpet viper).